The primary structure comprises 286 residues: Versiconal hemiacetal acetate esterase stcI (286 aa).

The Involved in the stabilization of the negatively charged intermediate by the formation of the oxyanion hole motif lies at 54–56 (HAG). Catalysis depends on residues serine 123, aspartate 226, and histidine 256.

The protein belongs to the 'GDXG' lipolytic enzyme family.

The enzyme catalyses (2S,3S)-versiconal hemiacetal acetate + H2O = (2S-3S)-versiconal hemiacetal + acetate + H(+). The catalysed reaction is (3S)-versiconol acetate + H2O = (S)-versiconol + acetate + H(+). It functions in the pathway mycotoxin biosynthesis; sterigmatocystin biosynthesis. In terms of biological role, esterase; part of the gene cluster that mediates the biosynthesis of sterigmatocystin (ST), a polyketide-derived furanocoumarin which is part of the most toxic and carcinogenic compounds among the known mycotoxins. The first step in the biosynthesis of sterigmatocystin is the production of hexanoate by the fatty acid synthase (FAS) units stcJ and stcK. The polyketide backbone is assembled by the non-reducing polyketide synthase stcA by condensation of the starter hexanoyl-CoA and 7 malonyl-CoA extender units followed by cyclization and release of norsolorinic acid. Norsolorinic acid is the first stable intermediate in the biosynthesis of sterigmatocystin and is converted into averantin (AVN) by the ketoreductase stcE which reduces the hexanoate ketone to an alcohol. Averantin is then oxidized into 5'-hydroxyaverantin (HAVN) by the cytochrome P450 monooxygenase stcF. 5'-hydroxyaverantin is further converted to 5'-oxyaverantin (OAVN) by the 5'-hydroxyaverantin dehydrogenase stcG. The next step is the conversion of OAVN into averufin (AVF) which is catalyzed by a yet to be identified enzyme. The cytochrome P450 monooxygenase stcB and the flavin-binding monooxygenase stcW are both required for the conversion of averufin to 1-hydroxyversicolorone. The esterase stcI probably catalyzes the formation of versiconal hemiacetal acetate from 1-hydroxyversicolorone. The oxydoreductase stcN then probably catalyzes the biosynthetic step from versiconal to versicolorin B (VERB). The next step is performed by the versicolorin B desaturase stcL to produce versicolorin A (VERA). The ketoreductase stcU and the cytochrome P450 monooxygenase stcS are involved in the conversion of versicolorin A to demethylsterigmatocystin. The Baeyer-Villiger oxidas stcQ and the reductase stcR might be involved in the biosynthetic step from versicolorin A to demethylsterigmatocystin. The final step in the biosynthesis of sterigmatocystin is the methylation of demethylsterigmatocystin catalyzed by the methyltransferase stcP. This chain is Versiconal hemiacetal acetate esterase stcI, found in Emericella nidulans (strain FGSC A4 / ATCC 38163 / CBS 112.46 / NRRL 194 / M139) (Aspergillus nidulans).